Reading from the N-terminus, the 92-residue chain is Acyl carrier protein (92 aa).

The Carrier domain occupies 1 to 84 (MPSTADERQL…QIAAHLAEAV (84 aa)). The residue at position 44 (Ser-44) is an O-(pantetheine 4'-phosphoryl)serine.

It belongs to the acyl carrier protein (ACP) family. In terms of processing, 4'-phosphopantetheine is transferred from CoA to a specific serine of apo-ACP by AcpS. This modification is essential for activity because fatty acids are bound in thioester linkage to the sulfhydryl of the prosthetic group.

It is found in the cytoplasm. The protein operates within lipid metabolism; fatty acid biosynthesis. In terms of biological role, carrier of the growing fatty acid chain in fatty acid biosynthesis. This chain is Acyl carrier protein, found in Streptomyces coelicolor (strain ATCC BAA-471 / A3(2) / M145).